Consider the following 405-residue polypeptide: MGSINIVTPYMKIGQYLSFRNRDHFSWWHQKGPVLSQMLQACHYGVHEQYQYLTLFYAHLIPALGAYTEPSVGQKGNTLLSGAGRLELSRTFTVDDSSLRIAFEPTSFLASEKGTDPLNRVPLSRLLSVLGQLSGVSLGTDRYRTLADQLTTSDDDEEKLLNEPTLAEQLQSLPSRTQNILALELVNGFVKPELYFHPQMKALASGALVEDLLFDALRSVDSAGRLGKAIDLAKEFVQAAPTTTRPQFISYQIERSHSGAAKLFLTESAINWDQISGLWRYAQPETIQTEQNRALRVLWESLNVVEGNRGPNQFPIMMVLGLFAEEPFVRPQVAFPVVGMTEGAIARSIGRFFDNMGWKESSQSYVDGLRSYFPNEDLDQPLGKQAWVALSLFDSENPALTVFYY.

Dimethylallyl diphosphate contacts are provided by Y195, K262, and Q332.

Belongs to the tryptophan dimethylallyltransferase family.

Its pathway is alkaloid biosynthesis. Prenyltransferase; part of the gene cluster that mediates the biosynthesis of paraherquamide, a fungal indole alkaloid that belongs to a family of natural products containing a characteristic bicyclo[2.2.2]diazaoctane core. The first steps in the biosynthesis of paraherquamide is the production of the beta-methyl-proline precursor from L-isoleucine. They require oxidation of a terminally hydroxylated L-isoleucine to the corresponding aldehyde by enzymes which have still to be identified. Spontaneous cyclization and dehydration would yield the 4-methyl pyrolline-5-carboxylic acid, which is then reduced by the pyrroline-5-carboxylate reductase phqD leading to the beta-methyl-proline precursor. The next step of paraherquamide biosynthesis involves coupling of beta-methyl-proline and L-tryptophan by the bimodular NRPS phqB, to produce a monooxopiperazine intermediate. The reductase (R) domain of phqB utilizes NADPH for hydride transfer to reduce the thioester bond of the T domain-tethered linear dipeptide to a hemithioaminal intermediate, which spontaneously cleaves the C-S bond to release the aldehyde product. This compound undergoes spontaneous cyclization and dehydration to give a dienamine which is reverse prenylated at C-2 by the reverse prenyltransferase phqJ. The other prenyltransferase present in the cluster, phqI may be a redundant gene in the pathway. During biosynthetic assembly, the key step to produce the polycyclic core is catalyzed by the bifunctional reductase and intramolecular [4+2] Diels-Alderase, phqE, resulting in formation of the [2.2.2] diazaoctane intermediate preparaherquamide. Following formation of preparaherquamide, an indole 2,3-epoxidation-initiated pinacol-like rearrangement is catalyzed by the phqK FAD-dependent monooxygenase. The prenyltransferase phqA, the cytochrome P450 monooxygenase phqL, and the FAD-linked oxidoreductase phqH (or the cytochrome P450 monooxygenase phqM), are proposed to be involved in the formation of the pyran ring. The FAD-dependent monooxygenase phqK is likely responsible for generation of the spiro-oxindole, and the N-methylation is likely mediated by the phqN methyltransferase leading to the isolable natural product paraherquamide F. However, the order of these biosynthetic steps has still to be determined. In late-stage paraherquamide biosynthesis, the third P450 monooxygenase, phqO, is probably responsible for the C-14 hydroxylation, transforming paraherquamide F to paraherquamide G, and paraherquamide E to the final product paraherquamide A. The expansion from the 6-membered ring pyran (in paraherquamides F and G) to the 7-membered dioxepin ring (in paraherquamides A and E) represents a poorly understood but intriguing process that probably involves the 2-oxoglutarate-dependent dioxygenase phqC. Finally, the remaining members of the paraherquamide cluster, including phqI as well as phqM (or phqH), do not have a clearly prescribed role and appear to be redundant. This chain is Prenyltransferase phqA, found in Penicillium fellutanum.